The following is a 264-amino-acid chain: S-adenosylmethionine decarboxylase proenzyme (264 aa).

Ser113 functions as the Schiff-base intermediate with substrate; via pyruvic acid in the catalytic mechanism. Position 113 is a pyruvic acid (Ser); by autocatalysis (Ser113). Residue His118 is the Proton acceptor; for processing activity of the active site. The active-site Proton donor; for catalytic activity is Cys141.

It belongs to the prokaryotic AdoMetDC family. Type 2 subfamily. Heterooctamer of four alpha and four beta chains arranged as a tetramer of alpha/beta heterodimers. It depends on pyruvate as a cofactor. In terms of processing, is synthesized initially as an inactive proenzyme. Formation of the active enzyme involves a self-maturation process in which the active site pyruvoyl group is generated from an internal serine residue via an autocatalytic post-translational modification. Two non-identical subunits are generated from the proenzyme in this reaction, and the pyruvate is formed at the N-terminus of the alpha chain, which is derived from the carboxyl end of the proenzyme. The post-translation cleavage follows an unusual pathway, termed non-hydrolytic serinolysis, in which the side chain hydroxyl group of the serine supplies its oxygen atom to form the C-terminus of the beta chain, while the remainder of the serine residue undergoes an oxidative deamination to produce ammonia and the pyruvoyl group blocking the N-terminus of the alpha chain.

It carries out the reaction S-adenosyl-L-methionine + H(+) = S-adenosyl 3-(methylsulfanyl)propylamine + CO2. The protein operates within amine and polyamine biosynthesis; S-adenosylmethioninamine biosynthesis; S-adenosylmethioninamine from S-adenosyl-L-methionine: step 1/1. Catalyzes the decarboxylation of S-adenosylmethionine to S-adenosylmethioninamine (dcAdoMet), the propylamine donor required for the synthesis of the polyamines spermine and spermidine from the diamine putrescine. The sequence is that of S-adenosylmethionine decarboxylase proenzyme from Stenotrophomonas maltophilia (strain R551-3).